Here is a 296-residue protein sequence, read N- to C-terminus: Phosphatidylserine decarboxylase proenzyme (296 aa).

Active-site charge relay system; for autoendoproteolytic cleavage activity residues include Asp-100, His-157, and Ser-263. Ser-263 (schiff-base intermediate with substrate; via pyruvic acid; for decarboxylase activity) is an active-site residue. Ser-263 is modified (pyruvic acid (Ser); by autocatalysis).

It belongs to the phosphatidylserine decarboxylase family. PSD-B subfamily. Prokaryotic type I sub-subfamily. Heterodimer of a large membrane-associated beta subunit and a small pyruvoyl-containing alpha subunit. Requires pyruvate as cofactor. Post-translationally, is synthesized initially as an inactive proenzyme. Formation of the active enzyme involves a self-maturation process in which the active site pyruvoyl group is generated from an internal serine residue via an autocatalytic post-translational modification. Two non-identical subunits are generated from the proenzyme in this reaction, and the pyruvate is formed at the N-terminus of the alpha chain, which is derived from the carboxyl end of the proenzyme. The autoendoproteolytic cleavage occurs by a canonical serine protease mechanism, in which the side chain hydroxyl group of the serine supplies its oxygen atom to form the C-terminus of the beta chain, while the remainder of the serine residue undergoes an oxidative deamination to produce ammonia and the pyruvoyl prosthetic group on the alpha chain. During this reaction, the Ser that is part of the protease active site of the proenzyme becomes the pyruvoyl prosthetic group, which constitutes an essential element of the active site of the mature decarboxylase.

It localises to the cell membrane. The catalysed reaction is a 1,2-diacyl-sn-glycero-3-phospho-L-serine + H(+) = a 1,2-diacyl-sn-glycero-3-phosphoethanolamine + CO2. It functions in the pathway phospholipid metabolism; phosphatidylethanolamine biosynthesis; phosphatidylethanolamine from CDP-diacylglycerol: step 2/2. Functionally, catalyzes the formation of phosphatidylethanolamine (PtdEtn) from phosphatidylserine (PtdSer). This is Phosphatidylserine decarboxylase proenzyme from Actinobacillus pleuropneumoniae serotype 7 (strain AP76).